A 156-amino-acid chain; its full sequence is Small ribosomal subunit protein uS7 (156 aa).

This sequence belongs to the universal ribosomal protein uS7 family. In terms of assembly, part of the 30S ribosomal subunit. Contacts proteins S9 and S11.

Its function is as follows. One of the primary rRNA binding proteins, it binds directly to 16S rRNA where it nucleates assembly of the head domain of the 30S subunit. Is located at the subunit interface close to the decoding center, probably blocks exit of the E-site tRNA. This Acetivibrio thermocellus (strain ATCC 27405 / DSM 1237 / JCM 9322 / NBRC 103400 / NCIMB 10682 / NRRL B-4536 / VPI 7372) (Clostridium thermocellum) protein is Small ribosomal subunit protein uS7.